Consider the following 870-residue polypeptide: A-kinase anchor protein 2 (870 aa).

Disordered stretches follow at residues 14-43 and 103-165; these read PGITSTPHSKDHSSPFYSPSHNGLLTDHHE and IEKA…SSRD. At serine 122 the chain carries Phosphoserine. A compositionally biased stretch (polar residues) spans 133-151; that stretch reads GHSTDQPQDMLGNSLQAPA. Serine 152 is modified (phosphoserine). The span at 152–161 shows a compositional bias: low complexity; that stretch reads SPSSSTSSHC. Residue lysine 174 forms a Glycyl lysine isopeptide (Lys-Gly) (interchain with G-Cter in SUMO1); alternate linkage. A Glycyl lysine isopeptide (Lys-Gly) (interchain with G-Cter in SUMO2); alternate cross-link involves residue lysine 174. A coiled-coil region spans residues 213–307; sequence EEMIELEKER…QQQQLSTSQL (95 aa). The interval 233-324 is disordered; sequence KNPGIAAKWW…EHLDSIEHTK (92 aa). The span at 259–274 shows a compositional bias: basic and acidic residues; sequence LESHRKYKERKEKRAQ. The segment covering 275-302 has biased composition (low complexity); the sequence is QEQLQLQQQQQQQLQQLQQLQQQQQQQL. Basic and acidic residues predominate over residues 313–324; it reads AHEHLDSIEHTK. A Phosphoserine modification is found at serine 347. The interval 409–436 is disordered; the sequence is ESQSAGAGTGNAATQGKEGPYSEPSKRG. Residues 410–424 show a composition bias toward low complexity; that stretch reads SQSAGAGTGNAATQG. A phosphoserine mark is found at serine 472, serine 476, and serine 528. The segment covering 506–543 has biased composition (polar residues); that stretch reads FSMDNISDSGASNETPNALQENSLADFSLPQTPQTDNP. Disordered regions lie at residues 506–577 and 595–688; these read FSMD…DPLE and QVDK…RPEG. Threonine 537 carries the phosphothreonine modification. The segment at 576 to 589 is PKA-RII subunit binding domain; sequence LEYQAGLLVQNAIQ. A compositionally biased stretch (basic and acidic residues) spans 595–608; it reads QVDKAEVHTSKEGS. At serine 641 the chain carries Phosphoserine. Positions 644 to 665 are enriched in basic and acidic residues; the sequence is QEKRDVLPKILPGEDKTLREKG. A coiled-coil region spans residues 720–755; sequence KLRSRKQRTLSMIEEEIRAAQEREEELKRQRQVRQS. Phosphoserine is present on residues serine 730, serine 758, serine 789, and serine 796. Residues 740–814 form a disordered region; the sequence is QEREEELKRQ…EAAGAQRPKN (75 aa). The span at 755-774 shows a compositional bias: polar residues; the sequence is STPSPRAQNAPSLPSRTTCY.

It localises to the apical cell membrane. In terms of biological role, binds to regulatory subunit (RII) of protein kinase A. May be involved in establishing polarity in signaling systems or in integrating PKA-RII isoforms with downstream effectors to capture, amplify and focus diffuse, trans-cellular signals carried by cAMP. Binds to and modulates the structure of the actin cytoskeleton. The chain is A-kinase anchor protein 2 from Rattus norvegicus (Rat).